Here is a 335-residue protein sequence, read N- to C-terminus: Pregnancy-specific beta-1-glycoprotein 2 (335 aa).

A signal peptide spans 1-34 (MGPLSAPPCTEHIKWKGLLVTASLLNFWNLPTTA). One can recognise an Ig-like V-type domain in the interval 35-144 (QVTIEAQPPK…TGYFTFTLYL (110 aa)). 4 N-linked (GlcNAc...) asparagine glycosylation sites follow: N61, N104, N111, and N199. 2 Ig-like C2-type domains span residues 147–234 (PKPS…VTLN) and 239–317 (PDLP…TSLT). 2 disulfides stabilise this stretch: C169-C217 and C261-C301.

Belongs to the immunoglobulin superfamily. CEA family.

The protein localises to the secreted. This Homo sapiens (Human) protein is Pregnancy-specific beta-1-glycoprotein 2 (PSG2).